The chain runs to 452 residues: UDP-N-acetylmuramoylalanine--D-glutamate ligase (452 aa).

ATP is bound at residue 115-121; the sequence is GTNGKTT.

The protein belongs to the MurCDEF family.

The protein resides in the cytoplasm. It carries out the reaction UDP-N-acetyl-alpha-D-muramoyl-L-alanine + D-glutamate + ATP = UDP-N-acetyl-alpha-D-muramoyl-L-alanyl-D-glutamate + ADP + phosphate + H(+). Its pathway is cell wall biogenesis; peptidoglycan biosynthesis. Its function is as follows. Cell wall formation. Catalyzes the addition of glutamate to the nucleotide precursor UDP-N-acetylmuramoyl-L-alanine (UMA). This Elusimicrobium minutum (strain Pei191) protein is UDP-N-acetylmuramoylalanine--D-glutamate ligase.